The primary structure comprises 534 residues: Coiled-coil domain-containing protein 183 (534 aa).

3 coiled-coil regions span residues 10 to 54, 136 to 209, and 321 to 406; these read EAQI…NLRR, DATK…DMTV, and RFLA…LLVI.

This is Coiled-coil domain-containing protein 183 (Ccdc183) from Mus musculus (Mouse).